An 899-amino-acid chain; its full sequence is Bifunctional uridylyltransferase/uridylyl-removing enzyme (899 aa).

Positions 1–342 (MPQVDPDLFD…PGDAAGRVEP (342 aa)) are uridylyltransferase. The tract at residues 343–705 (LNERFQVRDG…TTQREFEGAT (363 aa)) is uridylyl-removing. The 123-residue stretch at 461-583 (VDAHTLNLIK…VRDQTYLDYL (123 aa)) folds into the HD domain. 2 ACT domains span residues 706-789 (QIFI…IIQR) and 816-899 (ILEI…RISI).

The protein belongs to the GlnD family. Mg(2+) is required as a cofactor.

The enzyme catalyses [protein-PII]-L-tyrosine + UTP = [protein-PII]-uridylyl-L-tyrosine + diphosphate. The catalysed reaction is [protein-PII]-uridylyl-L-tyrosine + H2O = [protein-PII]-L-tyrosine + UMP + H(+). Its activity is regulated as follows. Uridylyltransferase (UTase) activity is inhibited by glutamine, while glutamine activates uridylyl-removing (UR) activity. Modifies, by uridylylation and deuridylylation, the PII regulatory proteins (GlnB and homologs), in response to the nitrogen status of the cell that GlnD senses through the glutamine level. Under low glutamine levels, catalyzes the conversion of the PII proteins and UTP to PII-UMP and PPi, while under higher glutamine levels, GlnD hydrolyzes PII-UMP to PII and UMP (deuridylylation). Thus, controls uridylylation state and activity of the PII proteins, and plays an important role in the regulation of nitrogen fixation and metabolism. This is Bifunctional uridylyltransferase/uridylyl-removing enzyme from Azotobacter vinelandii (strain DJ / ATCC BAA-1303).